A 182-amino-acid chain; its full sequence is Lipid A acyltransferase PagP (182 aa).

The signal sequence occupies residues 1–21; the sequence is MTQYFRALAFFLLLVPATAMA. Cys22 carries the N-palmitoyl cysteine lipid modification. A lipid anchor (S-diacylglycerol cysteine) is attached at Cys22. Residues His55, Asp98, and Ser99 contribute to the active site.

It belongs to the lipid A palmitoyltransferase family. Homodimer.

The protein localises to the cell outer membrane. The catalysed reaction is a lipid A + a 1,2-diacyl-sn-glycero-3-phosphocholine = a hepta-acyl lipid A + a 2-acyl-sn-glycero-3-phosphocholine. The enzyme catalyses a lipid IVA + a 1,2-diacyl-sn-glycero-3-phosphocholine = a lipid IVB + a 2-acyl-sn-glycero-3-phosphocholine. It catalyses the reaction a lipid IIA + a 1,2-diacyl-sn-glycero-3-phosphocholine = a lipid IIB + a 2-acyl-sn-glycero-3-phosphocholine. Functionally, transfers a fatty acid residue from the sn-1 position of a phospholipid to the N-linked hydroxyfatty acid chain on the proximal unit of lipid A or its precursors. Required for resistance to cationic antimicrobial peptides (CAMPs). Modifications of lipid A with an acyl chain to evade host immune defenses by resisting antibody-mediated complement lysis during respiratory infection. In Bordetella bronchiseptica (strain ATCC BAA-588 / NCTC 13252 / RB50) (Alcaligenes bronchisepticus), this protein is Lipid A acyltransferase PagP.